The following is a 342-amino-acid chain: MEPAFGEVNQLGGVFVNGRPLPNAIRLRIVELAQLGIRPCDISRQLRVSHGCVSKILARYNETGSILPGAIGGSKPRVTTPTVVKHIRTYKQRDPGIFAWEIRDRLLADGVCDKYNVPSVSSISRILRNKIGNLAQQGHYDSYKQHQPAPQPALPYNHIYSYPSPITAAAAKVPTPPGVPAIPGSVALPRTWPSSHSVTDILGIRSITDQGVSDSSPYHSPKVEEWSSLGRNNFPAAAPHAVNGLEKGALEQEAKYGQAPNGLPAVSSFVSASSMAPYPTPAQVSPYMTYSAAPSGYVAGHGWQHAGSTPLSPHNCDIPASLAFKGMQAAREGSHSVTASAL.

The paired DNA-binding region spans 4 to 130 (AFGEVNQLGG…SSISRILRNK (127 aa)). Positions 7–63 (EVNQLGGVFVNGRPLPNAIRLRIVELAQLGIRPCDISRQLRVSHGCVSKILARYNET) are PAI subdomain. The tract at residues 82-130 (TVVKHIRTYKQRDPGIFAWEIRDRLLADGVCDKYNVPSVSSISRILRNK) is RED subdomain. The tract at residues 168 to 189 (AAAAKVPTPPGVPAIPGSVALP) is interaction with KDM5B.

In terms of assembly, interacts with KDM5B. As to expression, in the embryo, expressed in pharyngeal pouches and derivatives, developing vertebral column, tail, head and limbs.

It is found in the nucleus. Its function is as follows. Transcription factor required for normal development of thymus, parathyroid glands, ultimobranchial bodies, teeth, skeletal elements of skull and larynx as well as distal limbs. This Mus musculus (Mouse) protein is Paired box protein Pax-9 (Pax9).